Reading from the N-terminus, the 184-residue chain is Elongation factor P (184 aa).

This sequence belongs to the elongation factor P family.

It localises to the cytoplasm. The protein operates within protein biosynthesis; polypeptide chain elongation. Its function is as follows. Involved in peptide bond synthesis. Stimulates efficient translation and peptide-bond synthesis on native or reconstituted 70S ribosomes in vitro. Probably functions indirectly by altering the affinity of the ribosome for aminoacyl-tRNA, thus increasing their reactivity as acceptors for peptidyl transferase. The protein is Elongation factor P of Delftia acidovorans (strain DSM 14801 / SPH-1).